A 475-amino-acid chain; its full sequence is Arginine biosynthesis bifunctional protein ArgJ 1, mitochondrial (475 aa).

Substrate is bound by residues T204, K233, T244, E331, N470, and T475. Catalysis depends on T244, which acts as the Nucleophile.

The protein belongs to the ArgJ family. As to quaternary structure, heterodimer of an alpha and a beta chain. The alpha and beta chains are autoproteolytically processed from a single precursor protein within the mitochondrion.

It localises to the mitochondrion matrix. The enzyme catalyses N(2)-acetyl-L-ornithine + L-glutamate = N-acetyl-L-glutamate + L-ornithine. The catalysed reaction is L-glutamate + acetyl-CoA = N-acetyl-L-glutamate + CoA + H(+). The protein operates within amino-acid biosynthesis; L-arginine biosynthesis; L-ornithine and N-acetyl-L-glutamate from L-glutamate and N(2)-acetyl-L-ornithine (cyclic): step 1/1. It functions in the pathway amino-acid biosynthesis; L-arginine biosynthesis; N(2)-acetyl-L-ornithine from L-glutamate: step 1/4. Its function is as follows. Catalyzes two activities which are involved in the cyclic version of arginine biosynthesis: the synthesis of acetylglutamate from glutamate and acetyl-CoA, and of ornithine by transacetylation between acetylornithine and glutamate. This Botryotinia fuckeliana (strain B05.10) (Noble rot fungus) protein is Arginine biosynthesis bifunctional protein ArgJ 1, mitochondrial.